The sequence spans 106 residues: Toxin-like structure LSTX-D6 (106 aa).

The first 20 residues, 1 to 20 (MMKVLVVAALLVTLISYSSS), serve as a signal peptide directing secretion. Positions 21-41 (EGIDDLEADELLSLMANEQTR) are excised as a propeptide. Intrachain disulfides connect C45–C60, C52–C69, C59–C85, and C71–C83.

This sequence belongs to the neurotoxin 19 (CSTX) family. 02 (D7) subfamily. In terms of tissue distribution, expressed by the venom gland.

The protein localises to the secreted. The polypeptide is Toxin-like structure LSTX-D6 (Lycosa singoriensis (Wolf spider)).